The primary structure comprises 383 residues: Probable arabinan endo-1,5-alpha-L-arabinosidase D (383 aa).

A signal peptide spans 1–22 (MVHITLPGLLLCLCLYLSVAPA). Aspartate 49 serves as the catalytic Proton acceptor. Asparagine 75, asparagine 163, and asparagine 206 each carry an N-linked (GlcNAc...) asparagine glycan. Glutamate 227 acts as the Proton donor in catalysis. Asparagine 325 is a glycosylation site (N-linked (GlcNAc...) asparagine). Residue asparagine 356 is the site of GPI-anchor amidated asparagine attachment. Residues 357–383 (PGNSLQPPSSVSLQIVAFLCLVILFTL) constitute a propeptide, removed in mature form.

This sequence belongs to the glycosyl hydrolase 43 family.

Its subcellular location is the cell membrane. The catalysed reaction is Endohydrolysis of (1-&gt;5)-alpha-arabinofuranosidic linkages in (1-&gt;5)-arabinans.. It functions in the pathway glycan metabolism; L-arabinan degradation. Endo-1,5-alpha-L-arabinanase involved in degradation of pectin. Its preferred substrate is linear 1,5-alpha-L-arabinan. The sequence is that of Probable arabinan endo-1,5-alpha-L-arabinosidase D (abnD) from Emericella nidulans (strain FGSC A4 / ATCC 38163 / CBS 112.46 / NRRL 194 / M139) (Aspergillus nidulans).